The chain runs to 516 residues: Probable malate:quinone oxidoreductase (516 aa).

It belongs to the MQO family. Requires FAD as cofactor.

The enzyme catalyses (S)-malate + a quinone = a quinol + oxaloacetate. Its pathway is carbohydrate metabolism; tricarboxylic acid cycle; oxaloacetate from (S)-malate (quinone route): step 1/1. The polypeptide is Probable malate:quinone oxidoreductase (Mycobacterium sp. (strain MCS)).